The sequence spans 142 residues: Hemoglobin subunit alpha-1 (142 aa).

Residue serine 1 is modified to N-acetylserine. The Globin domain maps to 1–142 (SLSDKDKAAV…VALALAERYR (142 aa)). O2 is bound at residue histidine 59. Histidine 88 contacts heme b.

The protein belongs to the globin family. Hb1 is a heterotetramer of two alpha-1 chains and two beta chains. HbC is a heterotetramer of two alpha-1 chains and two beta-C chains. In terms of tissue distribution, red blood cells.

Functionally, involved in oxygen transport from gills to the various peripheral tissues. The protein is Hemoglobin subunit alpha-1 (hba1) of Trematomus newnesi (Dusky notothen).